The following is a 142-amino-acid chain: HTH-type transcriptional regulator LrpA1 (142 aa).

Residues 1–72 (MSTESTEERI…GQSIAMVGID (72 aa)) form the HTH asnC-type domain. The H-T-H motif DNA-binding region spans 22–41 (YAAIAERADVSKPTVRKYID).

Its function is as follows. Transcription factor that regulates genes involved in amino acid metabolism. Represses the aspB3 gene, coding for an aspartate transaminase, in the presence of L-aspartate. Another target gene is the basal transcriptional regulator tfbB. Also binds its own promoter. This Halobacterium salinarum (strain ATCC 29341 / DSM 671 / R1) protein is HTH-type transcriptional regulator LrpA1 (lrpA1).